A 331-amino-acid polypeptide reads, in one-letter code: Ketol-acid reductoisomerase (NADP(+)) (331 aa).

Residues 2–181 (LEKYYDKDAD…GATRAVVFET (180 aa)) form the KARI N-terminal Rossmann domain. Residues 25 to 28 (YGSQ), R48, S52, and 82 to 85 (DEQQ) contribute to the NADP(+) site. Residue H107 is part of the active site. G133 contacts NADP(+). The 146-residue stretch at 182–327 (SFREETETDL…KEIRATMPQF (146 aa)) folds into the KARI C-terminal knotted domain. 4 residues coordinate Mg(2+): D190, E194, E226, and E230. S251 is a binding site for substrate.

This sequence belongs to the ketol-acid reductoisomerase family. Mg(2+) serves as cofactor.

The enzyme catalyses (2R)-2,3-dihydroxy-3-methylbutanoate + NADP(+) = (2S)-2-acetolactate + NADPH + H(+). It catalyses the reaction (2R,3R)-2,3-dihydroxy-3-methylpentanoate + NADP(+) = (S)-2-ethyl-2-hydroxy-3-oxobutanoate + NADPH + H(+). It participates in amino-acid biosynthesis; L-isoleucine biosynthesis; L-isoleucine from 2-oxobutanoate: step 2/4. Its pathway is amino-acid biosynthesis; L-valine biosynthesis; L-valine from pyruvate: step 2/4. Functionally, involved in the biosynthesis of branched-chain amino acids (BCAA). Catalyzes an alkyl-migration followed by a ketol-acid reduction of (S)-2-acetolactate (S2AL) to yield (R)-2,3-dihydroxy-isovalerate. In the isomerase reaction, S2AL is rearranged via a Mg-dependent methyl migration to produce 3-hydroxy-3-methyl-2-ketobutyrate (HMKB). In the reductase reaction, this 2-ketoacid undergoes a metal-dependent reduction by NADPH to yield (R)-2,3-dihydroxy-isovalerate. This is Ketol-acid reductoisomerase (NADP(+)) from Methanospirillum hungatei JF-1 (strain ATCC 27890 / DSM 864 / NBRC 100397 / JF-1).